A 179-amino-acid chain; its full sequence is MAKLHDYYKDEVVNKLMTEFNYNSVMQVPRVEKITLNMGVGEAIADKKLLDNAAADLAAISGQKPLITKARKSVAGFKIRQGYPIGCKVTLRGERMWEFFERLITIAVPRIRDFRGLSAKSFDGRGNYSMGVREQIIFPEIDYDKVDRVRGLDITITTTAKSDEEGRALLAAFDFPFRK.

Belongs to the universal ribosomal protein uL5 family. In terms of assembly, part of the 50S ribosomal subunit; part of the 5S rRNA/L5/L18/L25 subcomplex. Contacts the 5S rRNA and the P site tRNA. Forms a bridge to the 30S subunit in the 70S ribosome.

This is one of the proteins that bind and probably mediate the attachment of the 5S RNA into the large ribosomal subunit, where it forms part of the central protuberance. In the 70S ribosome it contacts protein S13 of the 30S subunit (bridge B1b), connecting the 2 subunits; this bridge is implicated in subunit movement. Contacts the P site tRNA; the 5S rRNA and some of its associated proteins might help stabilize positioning of ribosome-bound tRNAs. In Citrobacter koseri (strain ATCC BAA-895 / CDC 4225-83 / SGSC4696), this protein is Large ribosomal subunit protein uL5.